The primary structure comprises 215 residues: Adenylate kinase (215 aa).

Gly10–Thr15 is an ATP binding site. Positions Ser30 to Val59 are NMP. Residues Thr31, Arg36, Glu57–Val59, Gly85–Arg88, and Gln92 each bind AMP. Residues Gly126–Asp162 form an LID region. Arg127 contributes to the ATP binding site. The Zn(2+) site is built by Cys130 and Cys132. Residue Ser135–Tyr136 participates in ATP binding. Zn(2+)-binding residues include Cys149 and Cys152. Residues Arg159 and Arg170 each coordinate AMP. Residue Lys198 participates in ATP binding.

Belongs to the adenylate kinase family. Monomer.

It is found in the cytoplasm. The enzyme catalyses AMP + ATP = 2 ADP. It functions in the pathway purine metabolism; AMP biosynthesis via salvage pathway; AMP from ADP: step 1/1. Its function is as follows. Catalyzes the reversible transfer of the terminal phosphate group between ATP and AMP. Plays an important role in cellular energy homeostasis and in adenine nucleotide metabolism. The chain is Adenylate kinase from Methanosarcina barkeri (strain Fusaro / DSM 804).